The chain runs to 1479 residues: Chromosome partition protein MukB (1479 aa).

34–41 (GGNGAGKS) provides a ligand contact to ATP. Coiled coils occupy residues 138-163 (ETLN…MEGV) and 331-664 (QAAS…RLSQ). Positions 665-782 (PGGSEDPRLN…ALPLFGRAAR (118 aa)) are flexible hinge. Coiled coils occupy residues 831 to 1112 (DDPE…TAKA) and 1206 to 1257 (VEAI…MLNQ).

It belongs to the SMC family. MukB subfamily. In terms of assembly, homodimerization via its hinge domain. Binds to DNA via its C-terminal region. Interacts, and probably forms a ternary complex, with MukE and MukF via its C-terminal region. The complex formation is stimulated by calcium or magnesium. Interacts with tubulin-related protein FtsZ.

It is found in the cytoplasm. The protein resides in the nucleoid. Functionally, plays a central role in chromosome condensation, segregation and cell cycle progression. Functions as a homodimer, which is essential for chromosome partition. Involved in negative DNA supercoiling in vivo, and by this means organize and compact chromosomes. May achieve or facilitate chromosome segregation by condensation DNA from both sides of a centrally located replisome during cell division. The polypeptide is Chromosome partition protein MukB (Klebsiella pneumoniae).